We begin with the raw amino-acid sequence, 953 residues long: Ribonuclease E (953 aa).

2 disordered regions span residues 1 to 23 (MIDG…PDRL) and 118 to 314 (VAPQ…RRRP). The span at 14 to 23 (SQHEELPDRL) shows a compositional bias: basic and acidic residues. Positions 127 to 150 (LADDEDVDDGPDYVADDSDADDEG) are enriched in acidic residues. Residues 157–169 (NRRRRRGRRGRGR) show a composition bias toward basic residues. A compositionally biased stretch (polar residues) spans 183-193 (DQQSEPRAQQF). Residues 199 to 223 (AETDDGDDRDSEDTEAGDNGEDENG) are compositionally biased toward acidic residues. Residues 230–240 (RRRRRRRRRKS) show a composition bias toward basic residues. Basic and acidic residues-rich tracts occupy residues 263–272 (VHERVPRAGD) and 294–311 (TRLE…DAGR). In terms of domain architecture, S1 motif spans 376–453 (GNIYLGIVQN…GHKGARLTTQ (78 aa)). Mg(2+) is bound by residues Asp-647 and Asp-691. Residues Cys-749 and Cys-752 each contribute to the Zn(2+) site. Disordered regions lie at residues 766–808 (SAAA…APGE) and 822–953 (LAGR…IRLD). The segment covering 848–915 (DLDDTAQADF…DADVDEEDAA (68 aa)) has biased composition (acidic residues).

Belongs to the RNase E/G family. As to quaternary structure, assembles into a homotetramer formed by a dimer of dimers. Interacts with DNA-binding protein HU (hupB). Requires Mg(2+) as cofactor. It depends on Zn(2+) as a cofactor.

Its subcellular location is the cytoplasm. It catalyses the reaction Endonucleolytic cleavage of single-stranded RNA in A- and U-rich regions.. Its function is as follows. Endoribonuclease that plays a central role in RNA processing and decay. Plays a major role in pre-16S rRNA maturation, probably generating the mature 5'-end, and a minor role in pre-5S and pre-23S rRNA maturation. Probably also processes tRNA. RNase E and HupB jointly contribute to cellular adaptation to changing growth conditions and survival during antibiotic treatment and in the host. The sequence is that of Ribonuclease E from Mycobacterium tuberculosis (strain ATCC 25618 / H37Rv).